Consider the following 520-residue polypeptide: MAIWRIINRSYLKYASNQLTRNYYTQVCLASSTHVVKQTTKLSSFDIPNSDICTRPSNIFQNLRFLATSAQTRKKEAEVDSDGPRLNEKITGDYVRLVSEEGHCVVSLREALRRAKELQCDLVEVQRDAKPPVCKIVKYSLELYKKAKVGKERAKAKRAEAIRPDIKEIRFTPKIEAKDLKFKSDQALKLMESGYRVKCLAVPDKDKHKELEPEKLLELLFRFTCFIGDALVESWPEADRKGAVVIVRHAKFGPPKKGGVKLMKDIDIKSARVKEESPKPDSSKAGVATVDDQEDIEKSEPRFSVEQAQPVKFQNAYAKREPSSEFSGGRDASRFEPQSPNQHVNPQRPRFSNQAPNQQPTGRFDPQSPNQPPSAPRPQFPNQQPTGRFDPQFPSQPPRPQFPNQAPNQQSTGRFNPQFPNQRPSPPQSRFPDQAPNQQPSGPSPNRHPDRQGPPPRFQNQAPNQQPTGRFEPQPPNPPRAPPRPQTRLPNETSNEQPTAPGRSSGPASGYGIFSTPKTK.

The N-terminal 66 residues, 1–66 (MAIWRIINRS…SNIFQNLRFL (66 aa)), are a transit peptide targeting the mitochondrion. Basic and acidic residues predominate over residues 271 to 282 (ARVKEESPKPDS). Residues 271–520 (ARVKEESPKP…YGIFSTPKTK (250 aa)) form a disordered region. Polar residues predominate over residues 336–361 (EPQSPNQHVNPQRPRFSNQAPNQQPT). Over residues 369-379 (PNQPPSAPRPQ) the composition is skewed to pro residues. 2 stretches are compositionally biased toward polar residues: residues 404–422 (NQAP…FPNQ) and 458–468 (FQNQAPNQQPT). Positions 473–485 (PQPPNPPRAPPRP) are enriched in pro residues.

This sequence belongs to the IF-3 family. As to quaternary structure, monomer.

Its subcellular location is the mitochondrion. Its function is as follows. IF-3 binds to the 30S ribosomal subunit and shifts the equilibrium between 70S ribosomes and their 50S and 30S subunits in favor of the free subunits, thus enhancing the availability of 30S subunits on which protein synthesis initiation begins. This is Translation initiation factor IF3-1, mitochondrial from Arabidopsis thaliana (Mouse-ear cress).